The chain runs to 221 residues: UPF0758 protein ECA0145 (221 aa).

Positions 99–221 (AMLNPEATGQ…FVSFAERGWI (123 aa)) constitute an MPN domain. Zn(2+)-binding residues include His170, His172, and Asp183. A JAMM motif motif is present at residues 170 to 183 (HNHPSGKAEPSQAD).

This sequence belongs to the UPF0758 family. YicR subfamily.

The chain is UPF0758 protein ECA0145 from Pectobacterium atrosepticum (strain SCRI 1043 / ATCC BAA-672) (Erwinia carotovora subsp. atroseptica).